A 313-amino-acid polypeptide reads, in one-letter code: FAM172 family protein homolog Y75B8A.31 (313 aa).

The segment at 293–313 (VKSENSKESDDEAPKSKKICV) is disordered. Residues 296-307 (ENSKESDDEAPK) are compositionally biased toward basic and acidic residues.

It belongs to the FAM172 family.

The protein is FAM172 family protein homolog Y75B8A.31 of Caenorhabditis elegans.